The primary structure comprises 846 residues: MASSSLSNLMLAIHEKKTSSVDLYRPLRNYVTFTYSEREAQLIDDDLETLKQLRSDIERVSDPSPAARRDLLISYYKVLCLVETRFPISPDKDHVNAVSFVWYDAFKQKHKATQQNIHLEKAAVLFNLGASYSQIGLGHDRTTVDGRRQASHAFMAAAGAFAHLRDNESIKATIGPSTTVDVSVECVGMLERLMVAQAQECVFENTIAKGSTPGVSAKIARQVGIFYEEALSALIISPLKDHFDKGWISHVQLKAALFYGEACFRYGKELHEKEEIAEEIARLRSGASRLAEAKKSSRGAPAQLIEAMNTLESSINGNLDRAVKENDRVYLMRVPSPSSLSPLPAFSMVKPMNMTDILDASKEKMFSILVPDSSAKALSRYTEMVDDVIRTQAERLQQASELTRVRLKEMDLPDSILAVDGNSALPVDLKEDVEAVQISGGPAGLEAELQQLRDLKRVNQELLVHTEELLQKEATEDSQFRSQFGTRWTRPQSSTLTKNLQDRLNRFAANLKQAGESDVKIERSVRDNSALMSILDRRPIESAVPTLARPIMSLDATEDAIVGTLKQSLRQLENLGAQRAGLEDMLKEMKRKDDILPKLMTITGSYEDMFRKEISKYDHICEDISQNIEVQEQLLMQIQAQNEEFSTIFNLEDYKASKEKCYKQIQAAIMKYREIKENINEGLKFYVTLQDAITNVKQQCSDFVMTRSIQCRDMIEDVQRQMSGLSFQDHRSSGPYPSVHQPTASSPPPPPETQNPSHPHPHAPYYRPPEQMSRPGYSIPPYGPPPPYHTPHGQAPQPYPPQAQQQPHPSWQQGSYYDPQGQQPRPPYPGQSPYQPPHQGGGYYRQ.

The BRO1 domain occupies 5-403; it reads SLSNLMLAIH…ERLQQASELT (399 aa). Residues 565–592 are a coiled coil; it reads LKQSLRQLENLGAQRAGLEDMLKEMKRK. The interval 726 to 846 is disordered; sequence SFQDHRSSGP…PHQGGGYYRQ (121 aa). Composition is skewed to low complexity over residues 763-780 and 790-823; these read APYYRPPEQMSRPGYSIP and TPHGQAPQPYPPQAQQQPHPSWQQGSYYDPQGQQ. Over residues 824–836 the composition is skewed to pro residues; sequence PRPPYPGQSPYQP.

As to quaternary structure, homodimer. Interacts with AMSH3. Interacts with VPS32.1/SNF7B and VPS32.2/SNF7A. Interacts with ELC/VPS23A.

It is found in the cytoplasm. The protein localises to the late endosome. It localises to the endosome. The protein resides in the multivesicular body. Its function is as follows. Class E VPS protein involved in concentration and sorting of cargo proteins of the multivesicular body (MVB) for incorporation into intralumenal vesicles. Fusion between endosomes and the vacuole will then target the cargo proteins to the vacuolar lumen. Associates with FREE1 and ELC to perform function in the ESCRT-I complex. Binds ubiquitin in vitro. Plays a role in the biogenesis of vacuole and multivesicular bodies (MVBs). Required for the endosomal location of AMSH3. Mediates high-affinity phosphate transporter trafficking to maintain phosphate homeostasis. Regulates vacuolar degradation of PHT1-1. The protein is Vacuolar-sorting protein BRO1 of Arabidopsis thaliana (Mouse-ear cress).